The sequence spans 30 residues: Rothein 3.1 (30 aa).

L30 carries the post-translational modification Leucine amide.

Expressed by the skin dorsal glands.

The protein resides in the secreted. Functionally, lacks antimicrobial activity. Does not inhibit the formation of NO by neuronal nitric oxide. This chain is Rothein 3.1, found in Litoria rothii (Roth's tree frog).